A 629-amino-acid chain; its full sequence is Probable potassium transport system protein Kup 3 (629 aa).

A run of 12 helical transmembrane segments spans residues 20–40, 54–74, 106–126, 143–163, 171–191, 212–232, 253–273, 291–311, 343–363, 372–392, 400–420, and 425–445; these read LSLSALGIVYGDIGTSPLYTF, VTTIMGSASLIIWTLIIIASV, PFIIAVGLMGAALIYGDGTIT, PSLKYYVLPIAITILITLFAI, IGKAFGPVMAFWFLTIGILGA, FLFSNGATGFFILCGVFLCAT, WFGLAFPSLIFNYLGQAALVL, FLLPLIILSTVATIIASQAII, IYIGVVNWLLMLATLGLIIGF, AYGIAVSATMLCTTVLLFIAL, IITSGLVAGLFMIVDASFFAA, and FINGGYIPITLAIIIYSMMYI.

This sequence belongs to the HAK/KUP transporter (TC 2.A.72) family.

The protein localises to the cell inner membrane. It carries out the reaction K(+)(in) + H(+)(in) = K(+)(out) + H(+)(out). Transport of potassium into the cell. Likely operates as a K(+):H(+) symporter. The polypeptide is Probable potassium transport system protein Kup 3 (Legionella pneumophila (strain Paris)).